The chain runs to 122 residues: Large ribosomal subunit protein uL14 (122 aa).

It belongs to the universal ribosomal protein uL14 family. As to quaternary structure, part of the 50S ribosomal subunit. Forms a cluster with proteins L3 and L19. In the 70S ribosome, L14 and L19 interact and together make contacts with the 16S rRNA in bridges B5 and B8.

Functionally, binds to 23S rRNA. Forms part of two intersubunit bridges in the 70S ribosome. This Micrococcus luteus (Micrococcus lysodeikticus) protein is Large ribosomal subunit protein uL14.